The primary structure comprises 86 residues: Conotoxin S6.10 (86 aa).

The N-terminal stretch at 1–22 (MKLTCVLIIAVLFLTACQLATA) is a signal peptide. Residues 23-45 (KTYSKGRQKHRALRSTDKNIKLT) constitute a propeptide that is removed on maturation. Disulfide bonds link Cys48-Cys62, Cys55-Cys66, and Cys61-Cys73.

It belongs to the conotoxin O1 superfamily. In terms of tissue distribution, expressed by the venom duct.

The protein localises to the secreted. This is Conotoxin S6.10 from Conus striatus (Striated cone).